A 781-amino-acid polypeptide reads, in one-letter code: Catenin beta-1 (781 aa).

N-acetylalanine is present on alanine 2. The segment at 2–23 (ATQADLMELDMAMEPDRKAAVS) is interaction with VCL. At serine 23 the chain carries Phosphoserine; by GSK3-beta; alternate. O-linked (GlcNAc) serine; alternate glycosylation is present at serine 23. Serine 29 carries the phosphoserine; by GSK3-beta modification. Serine 33 and serine 37 each carry phosphoserine; by GSK3-beta and HIPK2. The segment at 34–57 (GIHSGATTTAPSLSGKGNPEEEDV) is disordered. Position 41 is a phosphothreonine; by GSK3-beta (threonine 41). Residue serine 45 is modified to Phosphoserine. Position 49 is an N6-acetyllysine (lysine 49). A Phosphotyrosine; by PTK6 modification is found at tyrosine 64. A Phosphotyrosine; by FYN and PTK6 modification is found at tyrosine 142. ARM repeat units lie at residues 151–191 (RAIP…IMRS), 193–234 (QMVS…IFKS), 235–276 (GGIP…VRLA), 277–318 (GGLQ…ILAS), 319–360 (GGPQ…IVEA), 361–389 (GGMQ…RNLS), 400–441 (GLLG…VCQV), 442–484 (GGIE…AQNA), 489–530 (YGLP…LREQ), 531–571 (GAIP…EIVE), 594–636 (NTIP…AEGA), and 637–666 (TAPL…SEDK). The interval 156–178 (LTKLLNDEDQVVVNKAAVMVHQL) is interaction with BCL9. Serine 191 carries the phosphoserine; by CDK5 modification. The residue at position 246 (serine 246) is a Phosphoserine; by CDK5. At tyrosine 331 the chain carries Phosphotyrosine; by PTK6. Tyrosine 333 carries the post-translational modification Phosphotyrosine; by SRC and PTK6. Phosphoserine is present on serine 552. Threonine 556 is subject to (Microbial infection) Phosphothreonine. Position 556 is a phosphothreonine (threonine 556). Cysteine 619 is modified (S-nitrosocysteine). Serine 675 is modified (phosphoserine). The segment at 705 to 781 (EPLGYRQDDP…NQLAWFDTDL (77 aa)) is disordered. The span at 734–745 (MMEHEMGGHHPG) shows a compositional bias: basic and acidic residues. Residues 772–781 (NQLAWFDTDL) are interaction with SCRIB.

This sequence belongs to the beta-catenin family. As to quaternary structure, two separate complex-associated pools are found in the cytoplasm. The majority is present as component of an E-cadherin:catenin adhesion complex composed of at least E-cadherin/CDH1 and beta-catenin/CTNNB1, and possibly alpha-catenin/CTNNA1; the complex is located to adherens junctions. The stable association of CTNNA1 is controversial as CTNNA1 was shown not to bind to F-actin when assembled in the complex. Alternatively, the CTNNA1-containing complex may be linked to F-actin by other proteins such as LIMA1. Another cytoplasmic pool is part of a large complex containing AXIN1, AXIN2, APC, CSNK1A1 and GSK3B that promotes phosphorylation on N-terminal Ser and Thr residues and ubiquitination of CTNNB1 via BTRC and its subsequent degradation by the proteasome. Wnt-dependent activation of DVL antagonizes the action of GSK3B. When GSK3B activity is inhibited the complex dissociates, CTNNB1 is dephosphorylated and is no longer targeted for destruction. The stabilized protein translocates to the nucleus, where it binds TCF/LEF-1 family members, BCL9, BCL9L and possibly also RUVBL1 and CHD8. Binds CTNNBIP and EP300. CTNNB1 forms a ternary complex with LEF1 and EP300 that is disrupted by CTNNBIP1 binding. Interacts with TAX1BP3 (via the PDZ domain); this interaction inhibits the transcriptional activity of CTNNB1. Interacts with AJAP1, BAIAP1, CARM1, CTNNA3, CXADR and PCDH11Y. Binds NHERF1. Interacts with GLIS2 and MUC1. Interacts with SLC30A9. Interacts with XIRP1. Interacts directly with AXIN1; the interaction is regulated by CDK2 phosphorylation of AXIN1. Interacts with SCRIB. Interacts with RAPGEF2. Interacts with PTPRU (via the cytoplasmic juxtamembrane domain). Interacts with EMD. Interacts with TNIK and TCF7L2. Interacts with SESTD1 and TRPC4. Interacts with CAV1. Interacts with TRPV4. The TRPV4 and CTNNB1 complex can interact with CDH1. Interacts with VCL. Interacts with PTPRJ. Interacts with PKT7 and CDK2. Interacts with FAT1 (via the cytoplasmic domain). Interacts with NANOS1 and NDRG2. Interacts with isoform 1 of NEK2. Interacts with both isoform 1 and isoform 2 of CDK5. Interacts with PTK6. Interacts with SOX7; this interaction may lead to proteasomal degradation of active CTNNB1 and thus inhibition of Wnt/beta-catenin-stimulated transcription. Identified in a complex with HINT1 and MITF. Interacts with FHIT. The CTNNB1 and TCF7L2/TCF4 complex interacts with PML (isoform PML-4). Interacts with FERMT2. Identified in a complex with TCF7L2/TCF4 and FERMT2. Interacts with RORA. May interact with P-cadherin/CDH3. Interacts with RNF220. Interacts with CTNND2. Interacts (via the C-terminal region) with CBY1. The complex composed, at least, of APC, CTNNB1 and GSK3B interacts with JPT1; the interaction requires the inactive form of GSK3B (phosphorylated at 'Ser-9'). Interacts with DLG5. Interacts with FAM53B; promoting translocation to the nucleus. Interacts with TMEM170B. Interacts with AHI1. Interacts with GID8. Component of an cadherin:catenin adhesion complex composed of at least of CDH26, beta-catenin/CTNNB1, alpha-catenin/CTNNA1 and p120 catenin/CTNND1. Forms a complex comprising APPL1, RUVBL2, APPL2, HDAC1 and HDAC2. Interacts with IRF2BPL; mediates the ubiquitination and degradation of CTNNB1. Interacts with AMFR. Interacts with LMBR1L. Interacts with SOX30; prevents interaction of CTNNB1 with TCF7L2/TCF4 and leads to inhibition of Wnt signaling. Interacts with SOX9; inhibiting CTNNB1 activity by competing with the binding sites of TCF/LEF within CTNNB1, thereby inhibiting the Wnt signaling. Interacts with SPN/CD43 cytoplasmic tail. Interacts (when phosphorylated at Tyr-333) with isoform M2 of PKM (PKM2); promoting transcription activation. Interacts with PKP2 (via HEAD domain). Interacts with CDH1. Interacts (when unphosphorylated) with FLYWCH1, perhaps preventing interaction of CTNNB1 with TCF4, and thereby regulating transcription activation; phosphorylation of CTNNB1 may inhibit the interaction. Interacts (via the central armadillo domains) with probable transcriptional regulator ADNP (via N-terminal region); interaction is direct and stabilizes CTNNB1 by modulating its phosphorylation by glycogen synthase kinase-3 beta GSK3B. Interacts with NR5A2. Interacts with DSG2; the interaction promotes localization of CTNNB1 at cell junctions thus reducing its nuclear localization and subsequent transcription of CTNNB1/TCF-target genes. In terms of assembly, (Microbial infection) Interacts with herpes virus 8 protein vPK; this interaction inhibits the Wnt signaling pathway. Phosphorylation at Ser-552 by AMPK promotes stabilization of the protein, enhancing TCF/LEF-mediated transcription. Phosphorylation by GSK3B requires prior phosphorylation of Ser-45 by another kinase. Phosphorylation proceeds then from Thr-41 to Ser-37 and Ser-33. Phosphorylated by NEK2. EGF stimulates tyrosine phosphorylation. Phosphorylated on Ser-33 and Ser-37 by HIPK2 and GSK3B, this phosphorylation triggers proteasomal degradation. Phosphorylation on Ser-191 and Ser-246 by CDK5. Phosphorylation by CDK2 regulates insulin internalization. Phosphorylation by PTK6 at Tyr-64, Tyr-142, Tyr-331 and/or Tyr-333 with the predominant site at Tyr-64 is not essential for inhibition of transcriptional activity. Phosphorylation by SRC at Tyr-333 promotes interaction with isoform M2 of PKM (PKM2); promoting transcription activation. Post-translationally, ubiquitinated by the SCF(BTRC) E3 ligase complex when phosphorylated by GSK3B, leading to its degradation. Ubiquitinated by a E3 ubiquitin ligase complex containing UBE2D1, SIAH1, CACYBP/SIP, SKP1, APC and TBL1X, leading to its subsequent proteasomal degradation. Ubiquitinated and degraded following interaction with SOX9. Ubiquitinated via 'Lys-11'- and 'Lys-29'-linked ubiquitin chains by UBR5, leading to its stabilization. In terms of processing, S-nitrosylation at Cys-619 within adherens junctions promotes VEGF-induced, NO-dependent endothelial cell permeability by disrupting interaction with E-cadherin, thus mediating disassembly adherens junctions. O-glycosylation at Ser-23 decreases nuclear localization and transcriptional activity, and increases localization to the plasma membrane and interaction with E-cadherin CDH1. Post-translationally, deacetylated at Lys-49 by SIRT1. In terms of processing, phosphorylated at Thr-556 by herpes virus 1/HHV-1 leading to CTNNB1 inhibition. As to expression, expressed in several hair follicle cell types: basal and peripheral matrix cells, and cells of the outer and inner root sheaths. Expressed in colon. Present in cortical neurons (at protein level). Expressed in breast cancer tissues (at protein level).

It localises to the cytoplasm. The protein localises to the nucleus. Its subcellular location is the cytoskeleton. The protein resides in the cell junction. It is found in the adherens junction. It localises to the cell membrane. The protein localises to the microtubule organizing center. Its subcellular location is the centrosome. The protein resides in the spindle pole. It is found in the synapse. It localises to the cilium basal body. Functionally, key downstream component of the canonical Wnt signaling pathway. In the absence of Wnt, forms a complex with AXIN1, AXIN2, APC, CSNK1A1 and GSK3B that promotes phosphorylation on N-terminal Ser and Thr residues and ubiquitination of CTNNB1 via BTRC and its subsequent degradation by the proteasome. In the presence of Wnt ligand, CTNNB1 is not ubiquitinated and accumulates in the nucleus, where it acts as a coactivator for transcription factors of the TCF/LEF family, leading to activate Wnt responsive genes. Also acts as a coactivator for other transcription factors, such as NR5A2. Promotes epithelial to mesenchymal transition/mesenchymal to epithelial transition (EMT/MET) via driving transcription of CTNNB1/TCF-target genes. Involved in the regulation of cell adhesion, as component of an E-cadherin:catenin adhesion complex. Acts as a negative regulator of centrosome cohesion. Involved in the CDK2/PTPN6/CTNNB1/CEACAM1 pathway of insulin internalization. Blocks anoikis of malignant kidney and intestinal epithelial cells and promotes their anchorage-independent growth by down-regulating DAPK2. Disrupts PML function and PML-NB formation by inhibiting RANBP2-mediated sumoylation of PML. Promotes neurogenesis by maintaining sympathetic neuroblasts within the cell cycle. Involved in chondrocyte differentiation via interaction with SOX9: SOX9-binding competes with the binding sites of TCF/LEF within CTNNB1, thereby inhibiting the Wnt signaling. Acts as a positive regulator of odontoblast differentiation during mesenchymal tooth germ formation, via promoting the transcription of differentiation factors such as LEF1, BMP2 and BMP4. Activity is repressed in a MSX1-mediated manner at the bell stage of mesenchymal tooth germ formation which prevents premature differentiation of odontoblasts. The polypeptide is Catenin beta-1 (Homo sapiens (Human)).